A 302-amino-acid chain; its full sequence is MQEERLTHLRQLEAESIYIIREVAAEFGNPVMLYSIGKDSSVMLHLARKAFFPGTLPFPLLHVDTGWKFREMYEFRDRTAKEYDFNLLVYKNPEGEALGINPFIHGSAKHTDIMKTEGLKQALDKYGFDAAFGGARRDEEKSRAKERIYSFRDKFHRWDPKNQRPELWHNYNGQINKGESIRVFPLSNWTELDIWQYIYLENIDIVPLYLAAKRPVIERDGMLMMVDDDRIDLKEGEKVEERMVRFRTLGCWPLTGAVESQAQTLPEIIEEMLVSTTSERQGRVIDRDQSGSMELKKRQGYF.

It belongs to the PAPS reductase family. CysD subfamily. In terms of assembly, heterodimer composed of CysD, the smaller subunit, and CysN.

The catalysed reaction is sulfate + ATP + H(+) = adenosine 5'-phosphosulfate + diphosphate. The protein operates within sulfur metabolism; hydrogen sulfide biosynthesis; sulfite from sulfate: step 1/3. With CysN forms the ATP sulfurylase (ATPS) that catalyzes the adenylation of sulfate producing adenosine 5'-phosphosulfate (APS) and diphosphate, the first enzymatic step in sulfur assimilation pathway. APS synthesis involves the formation of a high-energy phosphoric-sulfuric acid anhydride bond driven by GTP hydrolysis by CysN coupled to ATP hydrolysis by CysD. The sequence is that of Sulfate adenylyltransferase subunit 2 from Zymomonas mobilis subsp. mobilis (strain ATCC 31821 / ZM4 / CP4).